Consider the following 293-residue polypeptide: Large ribosomal subunit protein uL18 (293 aa).

The disordered stretch occupies residues 249 to 273; it reads DASPAAKKAAKPSKRHTAKRLTYDE. Over residues 256 to 267 the composition is skewed to basic residues; sequence KAAKPSKRHTAK.

Belongs to the universal ribosomal protein uL18 family. As to quaternary structure, component of the large ribosomal subunit (LSU).

It is found in the cytoplasm. The protein resides in the nucleus. Its function is as follows. Component of the ribosome, a large ribonucleoprotein complex responsible for the synthesis of proteins in the cell. The small ribosomal subunit (SSU) binds messenger RNAs (mRNAs) and translates the encoded message by selecting cognate aminoacyl-transfer RNA (tRNA) molecules. The large subunit (LSU) contains the ribosomal catalytic site termed the peptidyl transferase center (PTC), which catalyzes the formation of peptide bonds, thereby polymerizing the amino acids delivered by tRNAs into a polypeptide chain. The nascent polypeptides leave the ribosome through a tunnel in the LSU and interact with protein factors that function in enzymatic processing, targeting, and the membrane insertion of nascent chains at the exit of the ribosomal tunnel. This Caenorhabditis elegans protein is Large ribosomal subunit protein uL18 (rpl-5).